The following is a 78-amino-acid chain: Large ribosomal subunit protein bL28 (78 aa).

Residues 1-27 are disordered; the sequence is MSAYCQVTGRKPSFGKSVSHSHRRTNR.

The protein belongs to the bacterial ribosomal protein bL28 family.

This Corynebacterium kroppenstedtii (strain DSM 44385 / JCM 11950 / CIP 105744 / CCUG 35717) protein is Large ribosomal subunit protein bL28.